A 202-amino-acid polypeptide reads, in one-letter code: Imidazoleglycerol-phosphate dehydratase (202 aa).

This sequence belongs to the imidazoleglycerol-phosphate dehydratase family.

It is found in the cytoplasm. It catalyses the reaction D-erythro-1-(imidazol-4-yl)glycerol 3-phosphate = 3-(imidazol-4-yl)-2-oxopropyl phosphate + H2O. The protein operates within amino-acid biosynthesis; L-histidine biosynthesis; L-histidine from 5-phospho-alpha-D-ribose 1-diphosphate: step 6/9. This chain is Imidazoleglycerol-phosphate dehydratase, found in Lactococcus lactis subsp. cremoris (strain SK11).